Here is a 294-residue protein sequence, read N- to C-terminus: tRNA dimethylallyltransferase (294 aa).

Position 10-17 (10-17 (GPTAVGKT)) interacts with ATP. 12–17 (TAVGKT) is a substrate binding site. Positions 35-38 (DSQQ) are interaction with substrate tRNA.

It belongs to the IPP transferase family. As to quaternary structure, monomer. Mg(2+) serves as cofactor.

The enzyme catalyses adenosine(37) in tRNA + dimethylallyl diphosphate = N(6)-dimethylallyladenosine(37) in tRNA + diphosphate. Functionally, catalyzes the transfer of a dimethylallyl group onto the adenine at position 37 in tRNAs that read codons beginning with uridine, leading to the formation of N6-(dimethylallyl)adenosine (i(6)A). The protein is tRNA dimethylallyltransferase of Streptococcus pneumoniae (strain Taiwan19F-14).